A 142-amino-acid polypeptide reads, in one-letter code: Large ribosomal subunit protein uL13 (142 aa).

This sequence belongs to the universal ribosomal protein uL13 family. In terms of assembly, part of the 50S ribosomal subunit.

Functionally, this protein is one of the early assembly proteins of the 50S ribosomal subunit, although it is not seen to bind rRNA by itself. It is important during the early stages of 50S assembly. The protein is Large ribosomal subunit protein uL13 of Pectobacterium atrosepticum (strain SCRI 1043 / ATCC BAA-672) (Erwinia carotovora subsp. atroseptica).